Reading from the N-terminus, the 411-residue chain is Chorismate synthase (411 aa).

NADP(+)-binding residues include R40 and R46. FMN is bound by residues 135-137 (RAS) and 256-257 (QA). The interval 278 to 299 (HDGIARGADGRPRRTSDRAGGI) is disordered. Residues 285–294 (ADGRPRRTSD) are compositionally biased toward basic and acidic residues. Residues A301, 316 to 320 (KPIAT), and R342 contribute to the FMN site.

Belongs to the chorismate synthase family. In terms of assembly, homotetramer. Requires FMNH2 as cofactor.

It carries out the reaction 5-O-(1-carboxyvinyl)-3-phosphoshikimate = chorismate + phosphate. It functions in the pathway metabolic intermediate biosynthesis; chorismate biosynthesis; chorismate from D-erythrose 4-phosphate and phosphoenolpyruvate: step 7/7. Its function is as follows. Catalyzes the anti-1,4-elimination of the C-3 phosphate and the C-6 proR hydrogen from 5-enolpyruvylshikimate-3-phosphate (EPSP) to yield chorismate, which is the branch point compound that serves as the starting substrate for the three terminal pathways of aromatic amino acid biosynthesis. This reaction introduces a second double bond into the aromatic ring system. The polypeptide is Chorismate synthase (Micrococcus luteus (strain ATCC 4698 / DSM 20030 / JCM 1464 / CCM 169 / CCUG 5858 / IAM 1056 / NBRC 3333 / NCIMB 9278 / NCTC 2665 / VKM Ac-2230) (Micrococcus lysodeikticus)).